A 139-amino-acid chain; its full sequence is Actin-depolymerizing factor 9 (139 aa).

One can recognise an ADF-H domain in the interval 7–139 (GLAVNDECKF…SLDIIRARAH (133 aa)).

This sequence belongs to the actin-binding proteins ADF family.

Functionally, actin-depolymerizing protein. Severs actin filaments (F-actin) and binds to actin monomers. This chain is Actin-depolymerizing factor 9 (ADF9), found in Oryza sativa subsp. japonica (Rice).